The following is a 435-amino-acid chain: 3-phosphoshikimate 1-carboxyvinyltransferase (435 aa).

Positions 15, 16, and 20 each coordinate 3-phosphoshikimate. Phosphoenolpyruvate is bound at residue K15. Phosphoenolpyruvate is bound by residues G96 and R124. 3-phosphoshikimate-binding residues include S169, Q171, T195, D319, and K346. Q171 provides a ligand contact to phosphoenolpyruvate. Residue D319 is the Proton acceptor of the active site. Phosphoenolpyruvate is bound by residues R350 and R394.

This sequence belongs to the EPSP synthase family. As to quaternary structure, monomer.

The protein localises to the cytoplasm. The enzyme catalyses 3-phosphoshikimate + phosphoenolpyruvate = 5-O-(1-carboxyvinyl)-3-phosphoshikimate + phosphate. Its pathway is metabolic intermediate biosynthesis; chorismate biosynthesis; chorismate from D-erythrose 4-phosphate and phosphoenolpyruvate: step 6/7. In terms of biological role, catalyzes the transfer of the enolpyruvyl moiety of phosphoenolpyruvate (PEP) to the 5-hydroxyl of shikimate-3-phosphate (S3P) to produce enolpyruvyl shikimate-3-phosphate and inorganic phosphate. The sequence is that of 3-phosphoshikimate 1-carboxyvinyltransferase from Chloroherpeton thalassium (strain ATCC 35110 / GB-78).